The following is a 799-amino-acid chain: Phenylalanine--tRNA ligase beta subunit (799 aa).

Residues 40–147 (KSHLSSVITV…KDTTLGISVR (108 aa)) enclose the tRNA-binding domain. A B5 domain is found at 402-479 (SKTVTIETNL…RTIGYASIRT (78 aa)). Mg(2+)-binding residues include D457, D463, E466, and E467. One can recognise an FDX-ACB domain in the interval 707-799 (SHFPQGQLDL…TAKSNGYSLR (93 aa)).

Belongs to the phenylalanyl-tRNA synthetase beta subunit family. Type 1 subfamily. As to quaternary structure, tetramer of two alpha and two beta subunits. It depends on Mg(2+) as a cofactor.

It localises to the cytoplasm. It carries out the reaction tRNA(Phe) + L-phenylalanine + ATP = L-phenylalanyl-tRNA(Phe) + AMP + diphosphate + H(+). The polypeptide is Phenylalanine--tRNA ligase beta subunit (Leptospira biflexa serovar Patoc (strain Patoc 1 / Ames)).